We begin with the raw amino-acid sequence, 576 residues long: MRPAAATAPKWLLLALSALLPLWPTAKSWELTIMHTNDVHSRLEQTSDDSTKCLNASLCVGGVARLFTKVQQIRKEEPNVLLLDAGDQYQGTIWFTVYKGLEVAHFMNLLGYDAMALGNHEFDNGVEGLIDPLLRNVKFPILSANIKARGPLAPQISGLYLPYKVLSVGGEVVGIVGYTSKETPFLSNPGTNLVFEDEVTALQPEVDKLKTLNVNKIIALGHSGFEMDKLIAQKVRGVDVVVGGHTNTFLYTGNPPSKEVPAGKYPFIVTSDDGRKVPVVQAYAFGKYLGYLKVEFDDKGNVVTSYGNPILLNSTIREDAAIKADINQWRIKLDNYSTQELGRTIVYLNGSAQECRFRECNMGNLICDAMINNNLRHPDEMFWNHVSMCIVNGGGIRSPIDERNNGTITWENLAAVLPFGGTFDLVQLKGSTLKKAFEHSVHRYGQSTGEFLQVGGIHVVYDISRKPWDRVVQLKVLCTKCRVPIYEPLEMDKVYKVVLPSYLVNGGDGFQMIKDELLKHDSGDQDISVVSEYISKMKVIYPAVEGRIKFSAASHYQGSFPLIILSFWAVILVLYQ.

The signal sequence occupies residues 1-28 (MRPAAATAPKWLLLALSALLPLWPTAKS). The Zn(2+) site is built by Asp38 and His40. An intrachain disulfide couples Cys53 to Cys59. N-linked (GlcNAc...) asparagine glycosylation occurs at Asn55. Asp87, Asn119, His222, and His245 together coordinate Zn(2+). N-linked (GlcNAc...) asparagine glycosylation is found at Asn313, Asn335, and Asn349. 2 disulfides stabilise this stretch: Cys355/Cys360 and Cys367/Cys389. Residue Arg356 participates in AMP binding. Arg356 provides a ligand contact to IMP. 2 residues coordinate AMP: Asn392 and Arg397. 2 residues coordinate IMP: Asn392 and Arg397. Asn405 carries N-linked (GlcNAc...) asparagine glycosylation. Phe419 contributes to the AMP binding site. IMP is bound at residue Phe419. Cysteines 478 and 481 form a disulfide. AMP is bound by residues Tyr502 and Asp508. IMP is bound by residues Tyr502 and Asp508. Ser551 carries the GPI-anchor amidated serine lipid modification. Residues 552 to 576 (AASHYQGSFPLIILSFWAVILVLYQ) constitute a propeptide, removed in mature form.

Belongs to the 5'-nucleotidase family. In terms of assembly, homodimer. The cofactor is Zn(2+). As to expression, expressed in the brain.

The protein resides in the cell membrane. It catalyses the reaction a ribonucleoside 5'-phosphate + H2O = a ribonucleoside + phosphate. The enzyme catalyses a 2'-deoxyribonucleoside 5'-phosphate + H2O = a 2'-deoxyribonucleoside + phosphate. The catalysed reaction is dTMP + H2O = thymidine + phosphate. It carries out the reaction CMP + H2O = cytidine + phosphate. It catalyses the reaction IMP + H2O = inosine + phosphate. The enzyme catalyses AMP + H2O = adenosine + phosphate. The catalysed reaction is GMP + H2O = guanosine + phosphate. It carries out the reaction UMP + H2O = uridine + phosphate. It catalyses the reaction dAMP + H2O = 2'-deoxyadenosine + phosphate. The enzyme catalyses dCMP + H2O = 2'-deoxycytidine + phosphate. Functionally, catalyzes the hydrolysis of nucleotide monophosphates, releasing inorganic phosphate and the corresponding nucleoside. AMP is the preferred substrate but can also hydrolyze CMP and GMP. Shows a preference for ribonucleotide monophosphates over their equivalent deoxyribose forms. Other substrates include IMP, UMP, dAMP, dCMP, dTMP, NAD and NMN. The sequence is that of 5'-nucleotidase (Nt5e) from Rattus norvegicus (Rat).